The chain runs to 623 residues: Kelch-like protein diablo (623 aa).

A disordered region spans residues 1-54 (MGDLPGSGSTAQPRDAAVTGTGGNSTAGGGSSVGSTAVDRPPSPARLSHTSEKH). Thr19 carries the phosphothreonine modification. A compositionally biased stretch (gly residues) spans 20-32 (GTGGNSTAGGGSS). The BTB domain maps to 72 to 139 (CDVVLNVGGR…CYTAHIMVEE (68 aa)). In terms of domain architecture, BACK spans 174–276 (CLGIRAFADT…SPKFLVGTVG (103 aa)). Kelch repeat units follow at residues 323 to 369 (VLFA…VLND), 371 to 417 (LYAV…VLDG), 418 to 464 (FLYA…VLGG), 466 to 511 (LYAI…VFNN), 513 to 558 (IYAV…VVNG), and 559 to 605 (QLYA…VMRA).

The protein operates within protein modification; protein ubiquitination. Probable substrate-specific adapter of an E3 ubiquitin-protein ligase complex which mediates the ubiquitination and subsequent proteasomal degradation of target proteins. May have a role in synapse differentiation and growth. This chain is Kelch-like protein diablo, found in Drosophila erecta (Fruit fly).